The following is a 492-amino-acid chain: 3-octaprenyl-4-hydroxybenzoate carboxy-lyase (492 aa).

Asparagine 172 provides a ligand contact to Mn(2+). Prenylated FMN-binding positions include isoleucine 175–arginine 177, arginine 189–leucine 191, and arginine 194–glycine 195. Glutamate 238 serves as a coordination point for Mn(2+). Catalysis depends on aspartate 287, which acts as the Proton donor.

Belongs to the UbiD family. As to quaternary structure, homohexamer. The cofactor is prenylated FMN. Requires Mn(2+) as cofactor.

It localises to the cell membrane. The enzyme catalyses a 4-hydroxy-3-(all-trans-polyprenyl)benzoate + H(+) = a 2-(all-trans-polyprenyl)phenol + CO2. Its pathway is cofactor biosynthesis; ubiquinone biosynthesis. In terms of biological role, catalyzes the decarboxylation of 3-octaprenyl-4-hydroxy benzoate to 2-octaprenylphenol, an intermediate step in ubiquinone biosynthesis. The protein is 3-octaprenyl-4-hydroxybenzoate carboxy-lyase of Pasteurella multocida (strain Pm70).